The following is a 352-amino-acid chain: C-C chemokine receptor type 5 (352 aa).

The Extracellular portion of the chain corresponds to 1 to 30 (MVYQVSSPTYDIDYYTSEPCQKINVKQIAA). Tyr3 carries the sulfotyrosine modification. O-linked (GalNAc...) serine glycans are attached at residues Ser6 and Ser7. Sulfotyrosine is present on residues Tyr10, Tyr14, and Tyr15. 2 cysteine pairs are disulfide-bonded: Cys20-Cys269 and Cys101-Cys178. Residues 31–58 (RLLPPLYSLVFIFGFVGNILVVLILINC) traverse the membrane as a helical segment. Residues 59 to 68 (KRLKSMTDIY) lie on the Cytoplasmic side of the membrane. A helical membrane pass occupies residues 69 to 89 (LLNLAISDLLFLLTIPFWAHY). Residues 90–102 (AAAQWDFGNTMCQ) are Extracellular-facing. The helical transmembrane segment at 103–124 (LLTGLYLIGFFSGIFFIILLTI) threads the bilayer. The Cytoplasmic portion of the chain corresponds to 125 to 141 (DRYLAIVHAVFALKART). Residues 142–166 (VTFGLVTSVITWVVAVFASLPGIIF) traverse the membrane as a helical segment. At 167-198 (TRSQREGLHYTCSSHFPSSQYQFWKNFQTLKI) the chain is on the extracellular side. Residues 199 to 218 (VILGLVLPLLVMVICYSGIL) traverse the membrane as a helical segment. The Cytoplasmic portion of the chain corresponds to 219–235 (KTLLRCRNEKKRHRAVR). A helical transmembrane segment spans residues 236-260 (LIFTIMIVYFLFWAPYNIVLLLNTF). Topologically, residues 261-277 (QEFFGLNNCSSSNRLDQ) are extracellular. Residues 278–301 (AMQVTETLGMTHCCINPIIYAFVG) traverse the membrane as a helical segment. Over 302–352 (EKFRNYLLVFFQKHLAKRFCKCCSISQQEAPERASSVYTRSTGEQETTVGL) the chain is Cytoplasmic. Residues Cys321, Cys323, and Cys324 are each lipidated (S-palmitoyl cysteine). Residues Ser336, Ser337, and Ser342 each carry the phosphoserine; by BARK1 modification.

The protein belongs to the G-protein coupled receptor 1 family. In terms of assembly, interacts with PRAF2. Efficient ligand binding to CCL3/MIP-1alpha and CCL4/MIP-1beta requires sulfation, O-glycosylation and sialic acid modifications. Glycosylation on Ser-6 is required for efficient binding of CCL4. Interacts with GRK2. Interacts with ARRB1 and ARRB2. Interacts with CNIH4. Interacts with S100A4; this interaction stimulates T-lymphocyte chemotaxis. In terms of processing, sulfated on at least 2 of the N-terminal tyrosines. Sulfation is required for efficient binding of the chemokines, CCL3 and CCL4. Post-translationally, palmitoylation in the C-terminal is important for cell surface expression. Phosphorylation on serine residues in the C-terminal is stimulated by binding CC chemokines especially by APO-RANTES. In terms of processing, O-glycosylated, but not N-glycosylated. Ser-6 appears to be the major site even if Ser-7 may be also O-glycosylated. Also sialylated glycans present which contribute to chemokine binding. Thr-16 and Ser-17 may also be glycosylated and, if so, with small moieties such as a T-antigen.

The protein resides in the cell membrane. In terms of biological role, receptor for a number of inflammatory CC-chemokines including CCL3/MIP-1-alpha, CCL4/MIP-1-beta and RANTES and subsequently transduces a signal by increasing the intracellular calcium ion level. May play a role in the control of granulocytic lineage proliferation or differentiation. Participates in T-lymphocyte migration to the infection site by acting as a chemotactic receptor. The protein is C-C chemokine receptor type 5 (CCR5) of Allochrocebus solatus (Sun-tailed monkey).